The chain runs to 158 residues: MANQTIIDTVMKTVSPVIEPPYELVDVEYEKMGSDYILSVFVDKEGGISVEDTVTLTELISPLLDAIHPDPFPEQYMLEVSSPGLERPLKTPEALTKAIGSYVNVSLYKAIDKVKVFQGDLVAFDGDTLTIHYLDKTRQKTVEIPYQTVAKARLAVKL.

It belongs to the RimP family.

Its subcellular location is the cytoplasm. In terms of biological role, required for maturation of 30S ribosomal subunits. The polypeptide is Ribosome maturation factor RimP (Streptococcus uberis (strain ATCC BAA-854 / 0140J)).